The sequence spans 210 residues: Histidine biosynthesis bifunctional protein HisIE (210 aa).

The tract at residues 1-121 is phosphoribosyl-AMP cyclohydrolase; that stretch reads MNPASPFATL…DAQEESQMVW (121 aa). The segment at 122 to 210 is phosphoribosyl-ATP pyrophosphohydrolase; it reads LHQLEQLLAE…VINKLKERHK (89 aa).

It in the N-terminal section; belongs to the PRA-CH family. In the C-terminal section; belongs to the PRA-PH family.

The protein localises to the cytoplasm. The enzyme catalyses 1-(5-phospho-beta-D-ribosyl)-ATP + H2O = 1-(5-phospho-beta-D-ribosyl)-5'-AMP + diphosphate + H(+). The catalysed reaction is 1-(5-phospho-beta-D-ribosyl)-5'-AMP + H2O = 1-(5-phospho-beta-D-ribosyl)-5-[(5-phospho-beta-D-ribosylamino)methylideneamino]imidazole-4-carboxamide. Its pathway is amino-acid biosynthesis; L-histidine biosynthesis; L-histidine from 5-phospho-alpha-D-ribose 1-diphosphate: step 2/9. It participates in amino-acid biosynthesis; L-histidine biosynthesis; L-histidine from 5-phospho-alpha-D-ribose 1-diphosphate: step 3/9. The chain is Histidine biosynthesis bifunctional protein HisIE (hisI) from Vibrio cholerae serotype O1 (strain ATCC 39315 / El Tor Inaba N16961).